The chain runs to 422 residues: Gamma-glutamyl phosphate reductase (422 aa).

This sequence belongs to the gamma-glutamyl phosphate reductase family.

It is found in the cytoplasm. It catalyses the reaction L-glutamate 5-semialdehyde + phosphate + NADP(+) = L-glutamyl 5-phosphate + NADPH + H(+). It functions in the pathway amino-acid biosynthesis; L-proline biosynthesis; L-glutamate 5-semialdehyde from L-glutamate: step 2/2. Catalyzes the NADPH-dependent reduction of L-glutamate 5-phosphate into L-glutamate 5-semialdehyde and phosphate. The product spontaneously undergoes cyclization to form 1-pyrroline-5-carboxylate. In Chloroflexus aggregans (strain MD-66 / DSM 9485), this protein is Gamma-glutamyl phosphate reductase.